The following is a 152-amino-acid chain: TOMM20-like protein 1 (152 aa).

At 1-9 (MPSVRSLLR) the chain is on the mitochondrial intermembrane side. A helical membrane pass occupies residues 10 to 29 (LLAAAAACGAFAFLGYCIYL). Residues 30 to 152 (NRKRRGDPAF…EQDCLEDDPD (123 aa)) are Cytoplasmic-facing. Residues 43–62 (LRDKRRAEPQKAEEQGTQLW) are disordered. The segment covering 47-56 (RRAEPQKAEE) has biased composition (basic and acidic residues).

The protein belongs to the Tom20 family.

It localises to the mitochondrion outer membrane. This Homo sapiens (Human) protein is TOMM20-like protein 1 (TOMM20L).